A 486-amino-acid chain; its full sequence is Glutamyl-tRNA(Gln) amidotransferase subunit A (486 aa).

Residues K75 and S150 each act as charge relay system in the active site. The Acyl-ester intermediate role is filled by S174.

Belongs to the amidase family. GatA subfamily. Heterotrimer of A, B and C subunits.

It carries out the reaction L-glutamyl-tRNA(Gln) + L-glutamine + ATP + H2O = L-glutaminyl-tRNA(Gln) + L-glutamate + ADP + phosphate + H(+). Its function is as follows. Allows the formation of correctly charged Gln-tRNA(Gln) through the transamidation of misacylated Glu-tRNA(Gln) in organisms which lack glutaminyl-tRNA synthetase. The reaction takes place in the presence of glutamine and ATP through an activated gamma-phospho-Glu-tRNA(Gln). The sequence is that of Glutamyl-tRNA(Gln) amidotransferase subunit A from Nostoc punctiforme (strain ATCC 29133 / PCC 73102).